The primary structure comprises 400 residues: Exodeoxyribonuclease 7 large subunit (400 aa).

The protein belongs to the XseA family. Heterooligomer composed of large and small subunits.

It localises to the cytoplasm. It carries out the reaction Exonucleolytic cleavage in either 5'- to 3'- or 3'- to 5'-direction to yield nucleoside 5'-phosphates.. Its function is as follows. Bidirectionally degrades single-stranded DNA into large acid-insoluble oligonucleotides, which are then degraded further into small acid-soluble oligonucleotides. The protein is Exodeoxyribonuclease 7 large subunit of Clostridium kluyveri (strain NBRC 12016).